Here is a 135-residue protein sequence, read N- to C-terminus: ATP synthase epsilon chain (135 aa).

Belongs to the ATPase epsilon chain family. F-type ATPases have 2 components, CF(1) - the catalytic core - and CF(0) - the membrane proton channel. CF(1) has five subunits: alpha(3), beta(3), gamma(1), delta(1), epsilon(1). CF(0) has three main subunits: a, b and c.

It is found in the cell inner membrane. Functionally, produces ATP from ADP in the presence of a proton gradient across the membrane. The sequence is that of ATP synthase epsilon chain from Rhodopseudomonas palustris (strain BisB5).